The primary structure comprises 380 residues: Chaperone protein DnaJ (380 aa).

The 65-residue stretch at 5–69 (DYYEILGVSK…QKRAHYDQFG (65 aa)) folds into the J domain. The CR-type zinc-finger motif lies at 135 to 217 (GKETDIEIPR…CGGTGRVKKR (83 aa)). Zn(2+)-binding residues include Cys148, Cys151, Cys165, Cys168, Cys191, Cys194, Cys205, and Cys208. 4 CXXCXGXG motif repeats span residues 148–155 (CDTCHGTG), 165–172 (CSYCHGTG), 191–198 (CPYCGGTG), and 205–212 (CTTCGGTG).

It belongs to the DnaJ family. As to quaternary structure, homodimer. It depends on Zn(2+) as a cofactor.

The protein localises to the cytoplasm. Functionally, participates actively in the response to hyperosmotic and heat shock by preventing the aggregation of stress-denatured proteins and by disaggregating proteins, also in an autonomous, DnaK-independent fashion. Unfolded proteins bind initially to DnaJ; upon interaction with the DnaJ-bound protein, DnaK hydrolyzes its bound ATP, resulting in the formation of a stable complex. GrpE releases ADP from DnaK; ATP binding to DnaK triggers the release of the substrate protein, thus completing the reaction cycle. Several rounds of ATP-dependent interactions between DnaJ, DnaK and GrpE are required for fully efficient folding. Also involved, together with DnaK and GrpE, in the DNA replication of plasmids through activation of initiation proteins. This chain is Chaperone protein DnaJ, found in Geobacillus sp. (strain WCH70).